Here is a 360-residue protein sequence, read N- to C-terminus: Catabolic L-serine/threonine dehydratase (360 aa).

Serine 2 bears the N-acetylserine mark. Lysine 37 is modified (N6-(pyridoxal phosphate)lysine).

The protein belongs to the serine/threonine dehydratase family. Pyridoxal 5'-phosphate serves as cofactor.

It localises to the mitochondrion. It carries out the reaction L-serine = pyruvate + NH4(+). The enzyme catalyses L-threonine = 2-oxobutanoate + NH4(+). The sequence is that of Catabolic L-serine/threonine dehydratase (CHA1) from Saccharomyces cerevisiae (strain ATCC 204508 / S288c) (Baker's yeast).